The sequence spans 347 residues: MEKPESEKKSAVSDVGAWAMNVISSVGIIMANKQLMSSSGFGFGFATTLTGFHFAFTALVGMVSNATGLSASKHVPLWELLWFSIVANISIAAMNFSLMLNSVGFYQISKLSMIPVVCVLEWILHSKHYCKEVKASVMVVVIGVGICTVTDVKVNAKGFICACTAVFSTSLQQISIGSLQKKYSVGSFELLSKTAPIQAISLLICGPFVDYLLSGKFISTYQMTYGAIFCILLSCALAVFCNISQYLCIGRFSATSFQVLGHMKTVCVLTLGWLLFDSEMTFKNIAGMAIAIVGMVIYSWAVDIEKQRNAKSTPHGKHSMTEDEIKLLKEGVEHIDLKDVELGDTKP.

10 consecutive transmembrane segments (helical) span residues 11-31, 43-63, 80-100, 103-123, 132-152, 159-179, 195-215, 223-243, 256-276, and 285-305; these read AVSD…IIMA, FGFA…VGMV, LLWF…SLML, VGFY…LEWI, EVKA…VTDV, FICA…IGSL, APIQ…LLSG, MTYG…FCNI, SFQV…WLLF, and IAGM…VDIE.

The protein belongs to the TPT transporter family. TPT (TC 2.A.7.9) subfamily. In terms of tissue distribution, widely expressed in the whole plant.

The protein resides in the golgi apparatus membrane. Its function is as follows. Nucleotide-sugar transporter that transports UDP-rhamnose or UDP-galactose and UMP in a strict counter-exchange mode. This Arabidopsis thaliana (Mouse-ear cress) protein is UDP-rhamnose/UDP-galactose transporter 1.